A 260-amino-acid chain; its full sequence is 5'-nucleotidase SurE (260 aa).

Residues D8, D9, S43, and N96 each coordinate a divalent metal cation.

It belongs to the SurE nucleotidase family. A divalent metal cation serves as cofactor.

It localises to the cytoplasm. It carries out the reaction a ribonucleoside 5'-phosphate + H2O = a ribonucleoside + phosphate. Nucleotidase that shows phosphatase activity on nucleoside 5'-monophosphates. The chain is 5'-nucleotidase SurE from Ruegeria pomeroyi (strain ATCC 700808 / DSM 15171 / DSS-3) (Silicibacter pomeroyi).